Here is an 89-residue protein sequence, read N- to C-terminus: UPF0175 protein ssl1255 (89 aa).

This sequence belongs to the UPF0175 family.

This is UPF0175 protein ssl1255 from Synechocystis sp. (strain ATCC 27184 / PCC 6803 / Kazusa).